Reading from the N-terminus, the 70-residue chain is ATP synthase subunit c (70 aa).

2 helical membrane passes run 4 to 24 (IAAA…NGLI) and 45 to 65 (IMFI…VIAF).

This sequence belongs to the ATPase C chain family. F-type ATPases have 2 components, F(1) - the catalytic core - and F(0) - the membrane proton channel. F(1) has five subunits: alpha(3), beta(3), gamma(1), delta(1), epsilon(1). F(0) has three main subunits: a(1), b(2) and c(10-14). The alpha and beta chains form an alternating ring which encloses part of the gamma chain. F(1) is attached to F(0) by a central stalk formed by the gamma and epsilon chains, while a peripheral stalk is formed by the delta and b chains.

The protein localises to the cell membrane. Functionally, f(1)F(0) ATP synthase produces ATP from ADP in the presence of a proton or sodium gradient. F-type ATPases consist of two structural domains, F(1) containing the extramembraneous catalytic core and F(0) containing the membrane proton channel, linked together by a central stalk and a peripheral stalk. During catalysis, ATP synthesis in the catalytic domain of F(1) is coupled via a rotary mechanism of the central stalk subunits to proton translocation. Its function is as follows. Key component of the F(0) channel; it plays a direct role in translocation across the membrane. A homomeric c-ring of between 10-14 subunits forms the central stalk rotor element with the F(1) delta and epsilon subunits. In Staphylococcus haemolyticus (strain JCSC1435), this protein is ATP synthase subunit c.